The sequence spans 81 residues: Putative membrane protein insertion efficiency factor (81 aa).

The interval Asn61–Glu81 is disordered.

The protein belongs to the UPF0161 family.

It is found in the cell inner membrane. Could be involved in insertion of integral membrane proteins into the membrane. The protein is Putative membrane protein insertion efficiency factor of Pseudomonas putida (strain ATCC 700007 / DSM 6899 / JCM 31910 / BCRC 17059 / LMG 24140 / F1).